We begin with the raw amino-acid sequence, 749 residues long: Protein SEY1 homolog 2 (749 aa).

The Cytoplasmic segment spans residues 1-671 (MIKNYGDRYH…QKHKQDFLQN (671 aa)). The region spanning 40-265 (GKNYNIVSII…YEKNVRWSDM (226 aa)) is the GB1/RHD3-type G domain. 50–57 (GSQSTGKS) lines the GTP pocket. A coiled-coil region spans residues 445–465 (NQLKAFVEAQLATFKQQLDNI). A helical transmembrane segment spans residues 672-692 (IPKPFWFLLLFFMYDDVLRWM). Residues 693–695 (GNP) lie on the Lumenal side of the membrane. Residues 696 to 716 (LFLYPILIILCFVGFCIAIGL) traverse the membrane as a helical segment. The Cytoplasmic segment spans residues 717 to 749 (HSLPKLAFQWVFRTLNQAVIPIIFGGISKLKGS).

It belongs to the TRAFAC class dynamin-like GTPase superfamily. GB1/RHD3 GTPase family. RHD3 subfamily.

The protein resides in the endoplasmic reticulum membrane. In terms of biological role, probable GTP-binding protein that may be involved in cell development. This is Protein SEY1 homolog 2 from Paramecium tetraurelia.